The chain runs to 533 residues: Acyl-CoA-binding domain-containing protein 5 (533 aa).

One can recognise an ACB domain in the interval H42–M131. An acyl-CoA-binding positions include I53–F62, Y73–K77, K99, and Y118. The tract at residues T182–A227 is disordered. 4 positions are modified to phosphoserine: S194, S195, S197, and S201. A compositionally biased stretch (basic and acidic residues) spans E208–A227. S244 and S314 each carry phosphoserine. Positions G339 to R443 are disordered. Basic and acidic residues predominate over residues G374–E383. S429 carries the post-translational modification Phosphoserine. Positions D432–S442 are enriched in basic and acidic residues. Residues E448 to Q478 are a coiled coil. K470 bears the N6-acetyllysine mark. A helical transmembrane segment spans residues S503–Y525.

It belongs to the ATG37 family. Highly expressed in brain and liver. Lower levels of expression in spleen and heart.

The protein localises to the peroxisome membrane. Functionally, acyl-CoA binding protein which acts as the peroxisome receptor for pexophagy but is dispensable for aggrephagy and nonselective autophagy. Binds medium- and long-chain acyl-CoA esters. This Bos taurus (Bovine) protein is Acyl-CoA-binding domain-containing protein 5 (ACBD5).